Here is a 959-residue protein sequence, read N- to C-terminus: Mitogen-activated protein kinase kinase kinase 13 (959 aa).

A disordered region spans residues 1 to 47; that stretch reads MANPQEHLSCSSLPHLPLTENKTSGGRNELAAMGNHPSPKLPEDPQE. Positions 7–18 are enriched in low complexity; that stretch reads HLSCSSLPHLPL. One can recognise a Protein kinase domain in the interval 167 to 408; sequence ISELQWLGSG…FRQTLMHLDI (242 aa). ATP-binding positions include 173-181 and Lys194; that span reads LGSGAQGAV. Residue Asp278 is the Proton acceptor of the active site. Leucine-zipper stretches follow at residues 432–453 and 485–506; these read VKKH…DEEL and LSAI…EQAV. 4 disordered regions span residues 533-599, 739-828, 842-902, and 927-959; these read KRKG…GSHS, GSLD…RQRP, SSEN…LSDK, and NPVQ…SATW. Residues 566-577 show a composition bias toward polar residues; the sequence is SPLSGSPKMSTA. Residues 581–593 are compositionally biased toward basic residues; that stretch reads SRYRSKPRHRRGN. Composition is skewed to polar residues over residues 754 to 774 and 780 to 790; these read DLSS…SERT and SGCQSGISHQF. Residues 808-820 show a composition bias toward acidic residues; sequence DSSEEEGEVDSEV. Basic and acidic residues predominate over residues 866-876; the sequence is SANRRQDRLAE. Over residues 934–943 the composition is skewed to acidic residues; that stretch reads SDCDSSEGEC. A compositionally biased stretch (polar residues) spans 947 to 959; it reads TVRTSKNYSSATW.

It belongs to the protein kinase superfamily. STE Ser/Thr protein kinase family. MAP kinase kinase kinase subfamily. In terms of assembly, homodimer; forms dimers through the leucine-zipper motif. Interacts with the C-terminus of MAPK8IP1 through the kinase catalytic domain. Binds PRDX3. Associates with the IKK complex through the kinase domain. Mg(2+) serves as cofactor. In terms of processing, autophosphorylated on serine and threonine residues.

It is found in the cytoplasm. It localises to the membrane. It carries out the reaction L-seryl-[protein] + ATP = O-phospho-L-seryl-[protein] + ADP + H(+). The catalysed reaction is L-threonyl-[protein] + ATP = O-phospho-L-threonyl-[protein] + ADP + H(+). Activated by autophosphorylation and homodimerization. Its function is as follows. Activates the JUN N-terminal pathway through activation of the MAP kinase kinase MAP2K7. Acts synergistically with PRDX3 to regulate the activation of NF-kappa-B in the cytosol. This activation is kinase-dependent and involves activating the IKK complex, the IKBKB-containing complex that phosphorylates inhibitors of NF-kappa-B. The polypeptide is Mitogen-activated protein kinase kinase kinase 13 (Map3k13) (Mus musculus (Mouse)).